The chain runs to 1567 residues: ABC multidrug transporter MDR1 (1567 aa).

Residues 1–11 show a composition bias toward pro residues; it reads MASQPPQPPSG. The disordered stretch occupies residues 1–37; that stretch reads MASQPPQPPSGQPDTQYEEYQSEVITETTNRPTPAAD. Positions 22–32 are enriched in polar residues; sequence SEVITETTNRP. 3 N-linked (GlcNAc...) asparagine glycosylation sites follow: Asn-149, Asn-157, and Asn-356. The ABC transporter 1 domain occupies 167-432; that stretch reads VQYQDTFLSP…FEEMGWYCPP (266 aa). Transmembrane regions (helical) follow at residues 543–563, 571–591, 636–656, 661–681, 691–711, and 798–818; these read STIA…SLFF, GFFA…LMSI, IPIK…LGGL, AKFF…SAIF, IPQA…YTGF, and LGIL…VSEL. Residues Asn-819, Asn-895, and Asn-912 are each glycosylated (N-linked (GlcNAc...) asparagine). Residues 891 to 1134 enclose the ABC transporter 2 domain; it reads FTWRNVTYDI…LLNYFETHGA (244 aa). ATP is bound at residue 927 to 934; it reads GVSGAGKT. The segment at 1172–1202 is disordered; that stretch reads ESRHVQQELDRIQSETSKRNEGHGQSAEKEP. A helical transmembrane segment spans residues 1231–1251; it reads IWGKLLLGLTSALFIGFSFFL. An N-linked (GlcNAc...) asparagine glycan is attached at Asn-1253. Helical transmembrane passes span 1257 to 1277, 1305 to 1325, 1345 to 1365, 1372 to 1392, and 1498 to 1518; these read AGLQ…SSLV, VFLL…GIIA, ILLL…QMII, ETAG…NGVL, and GIGW…YYLI.

The protein belongs to the ABC transporter superfamily. ABCG family. PDR (TC 3.A.1.205) subfamily.

Its subcellular location is the cell membrane. It carries out the reaction voriconazole(in) + ATP + H2O = voriconazole(out) + ADP + phosphate + H(+). The enzyme catalyses fluconazole(in) + ATP + H2O = fluconazole(out) + ADP + phosphate + H(+). The catalysed reaction is (R)-miconazole(in) + ATP + H2O = (R)-miconazole(out) + ADP + phosphate + H(+). It catalyses the reaction (S)-miconazole(in) + ATP + H2O = (S)-miconazole(out) + ADP + phosphate + H(+). In terms of biological role, pleiotropic ABC efflux transporter that may be involved in the modulation susceptibility to a wide range of unrelated cytotoxic compounds. The chain is ABC multidrug transporter MDR1 from Trichophyton equinum (strain ATCC MYA-4606 / CBS 127.97) (Horse ringworm fungus).